The chain runs to 302 residues: Protein FLOURY 1 (302 aa).

The next 2 membrane-spanning stretches (helical) occupy residues 27 to 47 and 82 to 102; these read SAGAGALYFLIGSGLGVVAVL and LAGSVGAQRLLLATSLLFLAV. The disordered stretch occupies residues 160 to 195; sequence SSKPVSRSLAAEFDQEADGEEEDNAGETSDPDDGSV. A compositionally biased stretch (acidic residues) spans 172–192; the sequence is FDQEADGEEEDNAGETSDPDD. The GTD-binding domain occupies 193–299; that stretch reads GSVQYLRRRL…ALSETSEDDR (107 aa). Positions 199-254 form a coiled coil; it reads RRRLKEEMLLKEVALEELEKERHAAASAADEAMSKIACLRSEKALVEREARQFQEM. Residues 283–302 form a disordered region; the sequence is PEAITDRALSETSEDDRDKK.

Interacts (via C-terminus) with both 22 kDa and 19 kDa alpha-zeins. Interacts (via C-terminus) with OP10 (via N-terminus). Expressed in endosperm. Not detected in embryo, leaves and roots.

It localises to the endoplasmic reticulum membrane. Involved in protein body development and 22 kDa alpha-zein localization. This is Protein FLOURY 1 from Zea mays (Maize).